We begin with the raw amino-acid sequence, 142 residues long: Transcriptional regulator MraZ (142 aa).

SpoVT-AbrB domains are found at residues 5-47 (EYPY…PLAS) and 76-119 (ANKA…NPER).

Belongs to the MraZ family. In terms of assembly, forms oligomers.

It localises to the cytoplasm. The protein localises to the nucleoid. The chain is Transcriptional regulator MraZ from Deinococcus geothermalis (strain DSM 11300 / CIP 105573 / AG-3a).